Consider the following 96-residue polypeptide: Large ribosomal subunit protein uL4 (96 aa).

A disordered region spans residues 77 to 96 (RAPNKKVKRRELKKNPLKNL). Positions 79-96 (PNKKVKRRELKKNPLKNL) are enriched in basic residues.

It belongs to the universal ribosomal protein uL4 family. In terms of assembly, component of the large ribosomal subunit.

The protein localises to the cytoplasm. In terms of biological role, component of the large ribosomal subunit. The ribosome is a large ribonucleoprotein complex responsible for the synthesis of proteins in the cell. The polypeptide is Large ribosomal subunit protein uL4 (rpl4) (Xenopus tropicalis (Western clawed frog)).